Reading from the N-terminus, the 279-residue chain is uncharacterized protein (279 aa).

Helical transmembrane passes span G31–T51, L67–I87, and E115–L135.

This sequence belongs to the transketolase family. The cofactor is thiamine diphosphate.

The protein localises to the cell membrane. This is an uncharacterized protein from Sinorhizobium fredii (strain NBRC 101917 / NGR234).